The primary structure comprises 424 residues: Probable methyltransferase EP424R (424 aa).

The Adrift-type SAM-dependent 2'-O-MTase domain maps to 103–315 (QIVTNAWLKM…TYIVGKNRLR (213 aa)). Positions 135 and 228 each coordinate S-adenosyl-L-methionine. Lysine 268 serves as the catalytic Proton acceptor.

It localises to the virion. The chain is Probable methyltransferase EP424R from Ornithodoros (relapsing fever ticks).